A 301-amino-acid chain; its full sequence is MEDMNEYSNIEEFAEGSKINASKNQQDDGKMFIGGLSWDTSKKDLTEYLSRFGEVVDCTIKTDPVTGRSRGFGFVLFKDAASVDKVLELKEHKLDGKLIDPKRAKALKGKEPPKKVFVGGLSPDTSEEQIKEYFGAFGEIENIELPMDTKTNERRGFCFITYTDEEPVKKLLESRYHQIGSGKCEIKVAQPKEVYRQQQQQQKGGRGAAAGGRGGARGRGRGQGQNWNQGFNNYYDQGYGNYNSAYGGDQNYSGYGGYDYTGYNYGNYGYGQGYADYSGQQSTYGKASRGGGNHQNNYQPY.

RRM domains are found at residues 29–111 (GKMF…KGKE) and 114–193 (KKVF…QPKE). Lys42 is subject to N6-methyllysine. A Glycyl lysine isopeptide (Lys-Gly) (interchain with G-Cter in SUMO2) cross-link involves residue Lys90. The residue at position 97 (Lys97) is an N6-acetyllysine. Ser122 carries the post-translational modification Phosphoserine. Disordered regions lie at residues 194-229 (VYRQQQQQQKGGRGAAAGGRGGARGRGRGQGQNWNQ) and 279-301 (GQQSTYGKASRGGGNHQNNYQPY). The segment covering 204 to 223 (GGRGAAAGGRGGARGRGRGQ) has biased composition (gly residues). Residues 223 to 301 (QGQNWNQGFN…GNHQNNYQPY (79 aa)) are necessary for interaction with TNPO1. Arg289 carries the post-translational modification Dimethylated arginine; alternate. At Arg289 the chain carries Omega-N-methylarginine; alternate.

Interacts with TNPO1. Interacts with ZNF148. In terms of processing, dimethylation of Arg-289 is probably of the asymmetric type. In terms of tissue distribution, expressed in skeletal muscle, myoblast, myotube, heart, brain, liver, kidney, heart, lung, stomach, small intestine, large intestine, spleen, and testis (at protein level). Expressed in brain, skeletal muscle, heart, lung, liver, stomach, small intestine, large intestine, kidney, spleen and testis.

The protein localises to the nucleus. It is found in the cytoplasm. Acts as a transcriptional regulator. Promotes transcription repression. Promotes transcription activation in differentiated myotubes. Binds to double- and single-stranded DNA sequences. Binds to the transcription suppressor CATR sequence of the COX5B promoter. Binds with high affinity to RNA molecules that contain AU-rich elements (AREs) found within the 3'-UTR of many proto-oncogenes and cytokine mRNAs. Binds both to nuclear and cytoplasmic poly(A) mRNAs. Binds to poly(G) and poly(A), but not to poly(U) or poly(C) RNA homopolymers. Binds to the 5'-ACUAGC-3' RNA consensus sequence. The protein is Heterogeneous nuclear ribonucleoprotein D-like (Hnrnpdl) of Mus musculus (Mouse).